Consider the following 266-residue polypeptide: Regulatory protein RecX (266 aa).

The protein belongs to the RecX family.

The protein localises to the cytoplasm. Functionally, modulates RecA activity. The chain is Regulatory protein RecX from Levilactobacillus brevis (strain ATCC 367 / BCRC 12310 / CIP 105137 / JCM 1170 / LMG 11437 / NCIMB 947 / NCTC 947) (Lactobacillus brevis).